Reading from the N-terminus, the 1058-residue chain is Carbamoyl phosphate synthase large chain (1058 aa).

The tract at residues 1 to 401 (MPKRKDIQKI…SLLKACRSLE (401 aa)) is carboxyphosphate synthetic domain. The ATP site is built by Arg129, Arg169, Gly175, Gly176, Arg208, Ile210, Glu215, Gly241, Ile242, His243, Gln284, and Glu298. One can recognise an ATP-grasp 1 domain in the interval 133–327 (KQLMQELDQP…IAKLAAKIAV (195 aa)). Residues Gln284, Glu298, and Asn300 each contribute to the Mg(2+) site. Mn(2+)-binding residues include Gln284, Glu298, and Asn300. The segment at 402 to 546 (IGVCHNEMTS…YSTYELENES (145 aa)) is oligomerization domain. A carbamoyl phosphate synthetic domain region spans residues 547 to 929 (VQSNKESILV…ALYKAFEANN (383 aa)). The region spanning 671–861 (EKALKELGIP…MAQIATKLIL (191 aa)) is the ATP-grasp 2 domain. The ATP site is built by Arg707, Ser746, Ile748, Glu752, Gly777, Val778, His779, Ser780, Gln820, and Glu832. Mg(2+) contacts are provided by Gln820, Glu832, and Asn834. The Mn(2+) site is built by Gln820, Glu832, and Asn834. The region spanning 930 to 1058 (SHLSEFGQIV…ESRCFNIEAI (129 aa)) is the MGS-like domain. Positions 930–1058 (SHLSEFGQIV…ESRCFNIEAI (129 aa)) are allosteric domain.

It belongs to the CarB family. Composed of two chains; the small (or glutamine) chain promotes the hydrolysis of glutamine to ammonia, which is used by the large (or ammonia) chain to synthesize carbamoyl phosphate. Tetramer of heterodimers (alpha,beta)4. Requires Mg(2+) as cofactor. Mn(2+) serves as cofactor.

It carries out the reaction hydrogencarbonate + L-glutamine + 2 ATP + H2O = carbamoyl phosphate + L-glutamate + 2 ADP + phosphate + 2 H(+). The enzyme catalyses hydrogencarbonate + NH4(+) + 2 ATP = carbamoyl phosphate + 2 ADP + phosphate + 2 H(+). It functions in the pathway amino-acid biosynthesis; L-arginine biosynthesis; carbamoyl phosphate from bicarbonate: step 1/1. Its pathway is pyrimidine metabolism; UMP biosynthesis via de novo pathway; (S)-dihydroorotate from bicarbonate: step 1/3. Large subunit of the glutamine-dependent carbamoyl phosphate synthetase (CPSase). CPSase catalyzes the formation of carbamoyl phosphate from the ammonia moiety of glutamine, carbonate, and phosphate donated by ATP, constituting the first step of 2 biosynthetic pathways, one leading to arginine and/or urea and the other to pyrimidine nucleotides. The large subunit (synthetase) binds the substrates ammonia (free or transferred from glutamine from the small subunit), hydrogencarbonate and ATP and carries out an ATP-coupled ligase reaction, activating hydrogencarbonate by forming carboxy phosphate which reacts with ammonia to form carbamoyl phosphate. The protein is Carbamoyl phosphate synthase large chain of Streptococcus pyogenes serotype M6 (strain ATCC BAA-946 / MGAS10394).